Reading from the N-terminus, the 481-residue chain is Aromatic amino acid aminotransferase DDB_G0272014 (481 aa).

Lysine 300 carries the post-translational modification N6-(pyridoxal phosphate)lysine.

Belongs to the class-I pyridoxal-phosphate-dependent aminotransferase family. Pyridoxal 5'-phosphate serves as cofactor.

The protein localises to the cytoplasm. The enzyme catalyses an aromatic L-alpha-amino acid + 2-oxoglutarate = an aromatic oxo-acid + L-glutamate. Functionally, has aromatic amino acid transaminase activity. In Dictyostelium discoideum (Social amoeba), this protein is Aromatic amino acid aminotransferase DDB_G0272014.